Here is a 474-residue protein sequence, read N- to C-terminus: 2-succinylbenzoate--CoA ligase (474 aa).

The protein belongs to the ATP-dependent AMP-binding enzyme family. MenE subfamily.

It carries out the reaction 2-succinylbenzoate + ATP + CoA = 2-succinylbenzoyl-CoA + AMP + diphosphate. It participates in quinol/quinone metabolism; 1,4-dihydroxy-2-naphthoate biosynthesis; 1,4-dihydroxy-2-naphthoate from chorismate: step 5/7. Its pathway is quinol/quinone metabolism; menaquinone biosynthesis. Functionally, converts 2-succinylbenzoate (OSB) to 2-succinylbenzoyl-CoA (OSB-CoA). The chain is 2-succinylbenzoate--CoA ligase from Staphylococcus epidermidis (strain ATCC 35984 / DSM 28319 / BCRC 17069 / CCUG 31568 / BM 3577 / RP62A).